Reading from the N-terminus, the 255-residue chain is Aliphatic sulfonates import ATP-binding protein SsuB (255 aa).

The ABC transporter domain maps to 12–233; it reads LLLNAVSKHY…RLGSVRLAEL (222 aa). ATP is bound at residue 44 to 51; sequence GRSGGGKS.

The protein belongs to the ABC transporter superfamily. Aliphatic sulfonates importer (TC 3.A.1.17.2) family. As to quaternary structure, the complex is composed of two ATP-binding proteins (SsuB), two transmembrane proteins (SsuC) and a solute-binding protein (SsuA).

The protein resides in the cell inner membrane. The enzyme catalyses ATP + H2O + aliphatic sulfonate-[sulfonate-binding protein]Side 1 = ADP + phosphate + aliphatic sulfonateSide 2 + [sulfonate-binding protein]Side 1.. In terms of biological role, part of the ABC transporter complex SsuABC involved in aliphatic sulfonates import. Responsible for energy coupling to the transport system. The sequence is that of Aliphatic sulfonates import ATP-binding protein SsuB from Escherichia coli (strain K12).